We begin with the raw amino-acid sequence, 297 residues long: MSGPPPPYEEQSSHLYGQPASSQDGNAFIPEDFKYSTVVISCEPIIRQRFMHKVYSLLSCQLLASLSFCYWASVSTSLQNFIMSHIALFYICMVVSLVSCIWLAVSPRPEDYEASVPEPLLTGSSEEPAQEQRRLPWYVLSSYKQKLTLLSIFTLSEAYCLSLVTLAYDKDTVLSALLITTIVVVGVSLTALSERFENVLNSATSIYYWLNWGLWIMIGMGLTALLFGWNTHSSKFNLLYGWLGAILFTAYLFIDTQLIFRKVYPDEEVRCAMMLYLDIVNLFLSILRILANSNDDN.

Residues 1 to 53 (MSGPPPPYEEQSSHLYGQPASSQDGNAFIPEDFKYSTVVISCEPIIRQRFMHK) are Lumenal-facing. Residues 54–74 (VYSLLSCQLLASLSFCYWASV) traverse the membrane as a helical segment. Over 75-85 (STSLQNFIMSH) the chain is Cytoplasmic. Residues 86–106 (IALFYICMVVSLVSCIWLAVS) traverse the membrane as a helical segment. Residues 107 to 146 (PRPEDYEASVPEPLLTGSSEEPAQEQRRLPWYVLSSYKQK) are Lumenal-facing. A helical membrane pass occupies residues 147–167 (LTLLSIFTLSEAYCLSLVTLA). The Cytoplasmic segment spans residues 168–171 (YDKD). A helical transmembrane segment spans residues 172-192 (TVLSALLITTIVVVGVSLTAL). Residues 193–208 (SERFENVLNSATSIYY) are Lumenal-facing. Residues 209 to 229 (WLNWGLWIMIGMGLTALLFGW) form a helical membrane-spanning segment. Over 230–239 (NTHSSKFNLL) the chain is Cytoplasmic. Residues 240 to 260 (YGWLGAILFTAYLFIDTQLIF) form a helical membrane-spanning segment. Residues 261 to 270 (RKVYPDEEVR) are Lumenal-facing. The chain crosses the membrane as a helical span at residues 271–291 (CAMMLYLDIVNLFLSILRILA). The Cytoplasmic segment spans residues 292-297 (NSNDDN).

It belongs to the BI1 family. LFG subfamily.

It is found in the endoplasmic reticulum membrane. The protein resides in the vacuole membrane. The protein localises to the mitochondrion membrane. Its function is as follows. Links the unfolded protein response and programmed cell death and mediates mitochondrial-dependent apoptosis. Induces cell death and disruption of the mitochondrial transmembrane potential via the mitochondrial phosphate carrier MIR1. Dispensible for starvation-induced autophagy. The sequence is that of Bax inhibitor 1 (BXI1) from Saccharomyces cerevisiae (strain ATCC 204508 / S288c) (Baker's yeast).